A 299-amino-acid polypeptide reads, in one-letter code: uncharacterized protein (299 aa).

The chain crosses the membrane as a helical span at residues 25 to 45 (LLYFFKSLAMILFFIFFSLTS).

It is found in the membrane. This is an uncharacterized protein from Rickettsia prowazekii (strain Madrid E).